The chain runs to 165 residues: Large ribosomal subunit protein mL49 (165 aa).

Positions 42–75 (TTATTTTPLQQQQQQQPTTQPTTPIQTQTGAAPT) are enriched in low complexity. A disordered region spans residues 42–81 (TTATTTTPLQQQQQQQPTTQPTTPIQTQTGAAPTESTKPV).

The protein belongs to the mitochondrion-specific ribosomal protein mL49 family. As to quaternary structure, component of the mitochondrial large ribosomal subunit (mt-LSU). Mature N.crassa 74S mitochondrial ribosomes consist of a small (37S) and a large (54S) subunit. The 37S small subunit contains a 16S ribosomal RNA (16S mt-rRNA) and 32 different proteins. The 54S large subunit contains a 23S rRNA (23S mt-rRNA) and 42 different proteins.

It is found in the mitochondrion. Its function is as follows. Component of the mitochondrial ribosome (mitoribosome), a dedicated translation machinery responsible for the synthesis of mitochondrial genome-encoded proteins, including at least some of the essential transmembrane subunits of the mitochondrial respiratory chain. The mitoribosomes are attached to the mitochondrial inner membrane and translation products are cotranslationally integrated into the membrane. In Neurospora crassa (strain ATCC 24698 / 74-OR23-1A / CBS 708.71 / DSM 1257 / FGSC 987), this protein is Large ribosomal subunit protein mL49 (img2).